Reading from the N-terminus, the 473-residue chain is C3a anaphylatoxin chemotactic receptor (473 aa).

At 1 to 23 the chain is on the extracellular side; sequence MESFTADTNSTDLHSRPLFKPQD. Asn9 carries N-linked (GlcNAc...) asparagine glycosylation. Residues 24–46 form a helical membrane-spanning segment; it reads IASMVILSLTCLLGLPGNGLVLW. Residues 47–57 are Cytoplasmic-facing; it reads VAGVKMKRTVN. The chain crosses the membrane as a helical span at residues 58–80; the sequence is TVWFLHLTLADFLCCLSLPFSVA. Residues 81–96 are Extracellular-facing; the sequence is HLILRGHWPYGLFLCK. The cysteines at positions 95 and 172 are disulfide-linked. The chain crosses the membrane as a helical span at residues 97 to 118; that stretch reads LIPSVIILNMFASVFLLTAISL. Over 119-139 the chain is Cytoplasmic; sequence DRCLMVHKPIWCQNHRSVRTA. A helical membrane pass occupies residues 140–160; it reads FAVCGCVWVVTFVMCIPVFVY. At 161–329 the chain is on the extracellular side; that stretch reads RDLLVVDDYS…TPQVAITISR (169 aa). Sulfotyrosine occurs at positions 174 and 184. Residue Asn201 is glycosylated (N-linked (GlcNAc...) asparagine). A disordered region spans residues 233 to 252; that stretch reads FHTSPEDPFSQDSASQQPHY. Tyr308 carries the sulfotyrosine modification. Residues 330-349 form a helical membrane-spanning segment; sequence LVVGFLVPFFIMITCYSLIV. Over 350-366 the chain is Cytoplasmic; it reads FRMRKTNLTKSRNKTLR. Residues 367–389 traverse the membrane as a helical segment; the sequence is VAVAVVTVFFVCWIPYHIVGILL. The Extracellular portion of the chain corresponds to 390–406; sequence VITDQESALREVVLPWD. A helical membrane pass occupies residues 407 to 427; the sequence is HMSIALASANSCFNPFLYALL. Over 428-473 the chain is Cytoplasmic; it reads GKDFRKKARQSVKGILEAAFSEELTHSTSCTQDKAPSKRNHMSTDV. A Phosphoserine modification is found at Ser448. The residue at position 452 (Thr452) is a Phosphothreonine.

Belongs to the G-protein coupled receptor 1 family. In terms of assembly, interacts with VGF-derived peptide TLQP-21.

Its subcellular location is the cell membrane. Receptor for the chemotactic and inflammatory peptide anaphylatoxin C3a. This receptor stimulates chemotaxis, granule enzyme release and superoxide anion production. In Rattus norvegicus (Rat), this protein is C3a anaphylatoxin chemotactic receptor (C3ar1).